Consider the following 251-residue polypeptide: uncharacterized protein (251 aa).

This sequence belongs to the FAM243 family.

This is an uncharacterized protein from Mus musculus (Mouse).